Reading from the N-terminus, the 449-residue chain is Trigger factor (449 aa).

In terms of domain architecture, PPIase FKBP-type spans 173 to 258 (GDRVTVDFVG…LKKVEWPHLP (86 aa)).

It belongs to the FKBP-type PPIase family. Tig subfamily.

The protein localises to the cytoplasm. It carries out the reaction [protein]-peptidylproline (omega=180) = [protein]-peptidylproline (omega=0). Functionally, involved in protein export. Acts as a chaperone by maintaining the newly synthesized protein in an open conformation. Functions as a peptidyl-prolyl cis-trans isomerase. The protein is Trigger factor of Burkholderia mallei (strain NCTC 10229).